The chain runs to 104 residues: Ig kappa chain b5 variant C region (104 aa).

The 96-residue stretch at 5-100 folds into the Ig-like domain; sequence PTVLIFPPSP…SGSPVVQSFS (96 aa). Cys-26 and Cys-85 are joined by a disulfide.

This Oryctolagus cuniculus (Rabbit) protein is Ig kappa chain b5 variant C region.